The following is a 442-amino-acid chain: Septin-8 (442 aa).

Residue alanine 2 is modified to N-acetylalanine. Position 10 is a phosphoserine (serine 10). Residues 41–307 (QGFSFNILCV…ELYRRCKLEE (267 aa)) form the Septin-type G domain. Residues 51-58 (GETGIGKS) are G1 motif. GTP is bound by residues 51–58 (GETGIGKS), glycine 106, 187–195 (KADTISKSE), glycine 241, and arginine 256. Positions 103 to 106 (DAVG) are G3 motif. The G4 motif stretch occupies residues 186-189 (AKAD). Residues 322 to 410 (LQETYEAKRK…RKAAVEALQS (89 aa)) are a coiled coil. A compositionally biased stretch (basic and acidic residues) spans 377–391 (HQEEKRKVEEKRREL). The tract at residues 377–442 (HQEEKRKVEE…WSSIYSVTIP (66 aa)) is disordered. Composition is skewed to polar residues over residues 408–420 (LQSQ…SQQP) and 432–442 (GWSSIYSVTIP).

Belongs to the TRAFAC class TrmE-Era-EngA-EngB-Septin-like GTPase superfamily. Septin GTPase family. As to quaternary structure, septins polymerize into heterooligomeric protein complexes that form filaments, and can associate with cellular membranes, actin filaments and microtubules. GTPase activity is required for filament formation. Interacts with CDK14, SEPTIN4, SEPTIN5 and SEPTIN7. Interacts with VAMP2; the interaction inhibits interaction of VAMP2 with SYP. Interacts with STX1A.

The protein localises to the cytoplasm. It is found in the cytoskeleton. Its subcellular location is the synapse. It localises to the cell projection. The protein resides in the axon. The protein localises to the cytoplasmic vesicle. It is found in the secretory vesicle. Its subcellular location is the synaptic vesicle membrane. It localises to the presynapse. Filament-forming cytoskeletal GTPase. May play a role in platelet secretion. Seems to participate in the process of SNARE complex formation in synaptic vesicles. The sequence is that of Septin-8 from Callithrix jacchus (White-tufted-ear marmoset).